The following is a 559-amino-acid chain: Serine/threonine-protein kinase bur1 (559 aa).

The Protein kinase domain occupies 40 to 341; that stretch reads YEVLGKLGEG…AIDALNHPYF (302 aa). ATP is bound by residues 46-54 and Lys69; that span reads LGEGTFGEV. Catalysis depends on Asp171, which acts as the Proton acceptor. Residues 359-372 are compositionally biased toward basic and acidic residues; it reads SHEFDRRKFQDRKA. The disordered stretch occupies residues 359-559; it reads SHEFDRRKFQ…GRDRDAYARR (201 aa). Residues 400–414 show a composition bias toward gly residues; that stretch reads GRDGYGGGGRNGANG. Basic and acidic residues-rich tracts occupy residues 457–467, 491–534, and 543–559; these read DHTDGYRDRPP, YDRD…DSRT, and PVRD…YARR.

The protein belongs to the protein kinase superfamily. CMGC Ser/Thr protein kinase family. CDC2/CDKX subfamily.

The protein resides in the nucleus. It carries out the reaction L-seryl-[protein] + ATP = O-phospho-L-seryl-[protein] + ADP + H(+). It catalyses the reaction L-threonyl-[protein] + ATP = O-phospho-L-threonyl-[protein] + ADP + H(+). The catalysed reaction is [DNA-directed RNA polymerase] + ATP = phospho-[DNA-directed RNA polymerase] + ADP + H(+). Functionally, serine/threonine-protein kinase involved in transcription regulation. Phosphorylates the mus-8/ubc2 ubiquitin-conjugating enzyme (E2), leading to monoubiquitination of histone H2B and the silencing of telomeric-associated genes. Also required for histone H3 methylation. Necessary for the recovery from pheromone-induced growth arrest in the cell cycle G1 phase. The sequence is that of Serine/threonine-protein kinase bur1 (stk-1) from Neurospora crassa (strain ATCC 24698 / 74-OR23-1A / CBS 708.71 / DSM 1257 / FGSC 987).